Here is a 919-residue protein sequence, read N- to C-terminus: TRPM8 channel-associated factor 2 (919 aa).

The region spanning 542 to 841 (DCWVSTGLYL…TYLQLQEAFG (300 aa)) is the Peptidase M60 domain.

It belongs to the TCAF family. In terms of assembly, isoform 2 interacts with TRPM8 (via N-terminus and C-terminus domains); the interaction inhibits TRPM8 channel activity. Interacts with TRPV6. As to expression, isoform 2 is expressed in the prostate and in cancerous prostate samples.

It is found in the cell membrane. Its function is as follows. Negatively regulates the plasma membrane cation channel TRPM8 activity. Involved in the recruitment of TRPM8 to the cell surface. Promotes prostate cancer cell migration stimulation in a TRPM8-dependent manner. In Homo sapiens (Human), this protein is TRPM8 channel-associated factor 2.